A 507-amino-acid chain; its full sequence is ATP synthase subunit alpha, plastid (507 aa).

Position 170–177 (glycine 170–threonine 177) interacts with ATP.

Belongs to the ATPase alpha/beta chains family. In terms of assembly, F-type ATPases have 2 components, CF(1) - the catalytic core - and CF(0) - the membrane proton channel. CF(1) has five subunits: alpha(3), beta(3), gamma(1), delta(1), epsilon(1). CF(0) has four main subunits: a, b, b' and c.

It is found in the plastid membrane. The catalysed reaction is ATP + H2O + 4 H(+)(in) = ADP + phosphate + 5 H(+)(out). Functionally, produces ATP from ADP in the presence of a proton gradient across the membrane. The alpha chain is a regulatory subunit. The polypeptide is ATP synthase subunit alpha, plastid (Cuscuta gronovii (Common dodder)).